The sequence spans 92 residues: Large ribosomal subunit protein eL31 (92 aa).

It belongs to the eukaryotic ribosomal protein eL31 family.

The protein is Large ribosomal subunit protein eL31 of Halobacterium salinarum (strain ATCC 29341 / DSM 671 / R1).